We begin with the raw amino-acid sequence, 402 residues long: Phosphoglycerate kinase (402 aa).

Residues 24–26, arginine 40, 63–66, arginine 122, and arginine 155 each bind substrate; these read DFN and HFGR. ATP-binding positions include lysine 206, glycine 297, glutamate 328, and 358–361; that span reads GGDS.

Belongs to the phosphoglycerate kinase family. As to quaternary structure, monomer.

It localises to the cytoplasm. It catalyses the reaction (2R)-3-phosphoglycerate + ATP = (2R)-3-phospho-glyceroyl phosphate + ADP. It functions in the pathway carbohydrate degradation; glycolysis; pyruvate from D-glyceraldehyde 3-phosphate: step 2/5. This Prochlorococcus marinus (strain MIT 9301) protein is Phosphoglycerate kinase.